We begin with the raw amino-acid sequence, 219 residues long: FMN-dependent NADH:quinone oxidoreductase 2 (219 aa).

FMN contacts are provided by residues Ser-10 and 23 to 25 (SIS).

This sequence belongs to the azoreductase type 1 family. As to quaternary structure, homodimer. FMN is required as a cofactor.

The catalysed reaction is 2 a quinone + NADH + H(+) = 2 a 1,4-benzosemiquinone + NAD(+). It carries out the reaction N,N-dimethyl-1,4-phenylenediamine + anthranilate + 2 NAD(+) = 2-(4-dimethylaminophenyl)diazenylbenzoate + 2 NADH + 2 H(+). Quinone reductase that provides resistance to thiol-specific stress caused by electrophilic quinones. In terms of biological role, also exhibits azoreductase activity. Catalyzes the reductive cleavage of the azo bond in aromatic azo compounds to the corresponding amines. In Colwellia psychrerythraea (strain 34H / ATCC BAA-681) (Vibrio psychroerythus), this protein is FMN-dependent NADH:quinone oxidoreductase 2.